The following is a 189-amino-acid chain: Peptidyl-tRNA hydrolase (189 aa).

TRNA is bound at residue His-15. His-20 functions as the Proton acceptor in the catalytic mechanism. 3 residues coordinate tRNA: Phe-66, Asn-68, and Asn-114.

Belongs to the PTH family. As to quaternary structure, monomer.

The protein resides in the cytoplasm. It carries out the reaction an N-acyl-L-alpha-aminoacyl-tRNA + H2O = an N-acyl-L-amino acid + a tRNA + H(+). Functionally, hydrolyzes ribosome-free peptidyl-tRNAs (with 1 or more amino acids incorporated), which drop off the ribosome during protein synthesis, or as a result of ribosome stalling. Its function is as follows. Catalyzes the release of premature peptidyl moieties from peptidyl-tRNA molecules trapped in stalled 50S ribosomal subunits, and thus maintains levels of free tRNAs and 50S ribosomes. The chain is Peptidyl-tRNA hydrolase from Streptococcus equi subsp. equi (strain 4047).